Reading from the N-terminus, the 244-residue chain is Signal recognition particle receptor subunit beta (244 aa).

Residues 7–23 traverse the membrane as a helical segment; the sequence is IIACLLVIGTTIALIAV. GTP is bound by residues 45–53, 66–69, G90, and 154–157; these read GPQNSGKTS, TVVS, and NKSE.

It belongs to the SRP receptor beta subunit family. In terms of assembly, heterodimer of an alpha and a beta chain.

It localises to the endoplasmic reticulum membrane. In terms of biological role, component of the signal recognition particle (SRP) complex receptor (SR). Ensures, in conjunction with the SRP complex, the correct targeting of the nascent secretory proteins to the endoplasmic reticulum membrane system. May mediate the membrane association of SR. The sequence is that of Signal recognition particle receptor subunit beta (SRP102) from Saccharomyces cerevisiae (strain ATCC 204508 / S288c) (Baker's yeast).